We begin with the raw amino-acid sequence, 264 residues long: Tritrans,polycis-undecaprenyl-diphosphate synthase (geranylgeranyl-diphosphate specific) (264 aa).

The active site involves Asp43. A Mg(2+)-binding site is contributed by Asp43. Residues 44–47, Trp48, His60, and 88–90 each bind substrate; these read GNRR and STE. Asn91 serves as the catalytic Proton acceptor. Residues Phe92, Arg94, Arg213, and 219–221 contribute to the substrate site; that span reads RIS. A Mg(2+)-binding site is contributed by Glu232.

It belongs to the UPP synthase family. Homodimer. Mg(2+) serves as cofactor.

The catalysed reaction is geranylgeranyl diphosphate + 7 isopentenyl diphosphate = tri-trans,hepta-cis-undecaprenyl diphosphate + 7 diphosphate. Its function is as follows. Catalyzes the sequential condensation of isopentenyl diphosphate (IPP) with geranylgeranyl diphosphate (GGPP) to yield (2Z,6Z,10Z,14Z,18Z,22Z,26Z,30E,34E,38E)-undecaprenyl diphosphate (tritrans,heptacis-UPP). It is probably the precursor of glycosyl carrier lipids. This Thermococcus kodakarensis (strain ATCC BAA-918 / JCM 12380 / KOD1) (Pyrococcus kodakaraensis (strain KOD1)) protein is Tritrans,polycis-undecaprenyl-diphosphate synthase (geranylgeranyl-diphosphate specific).